The primary structure comprises 321 residues: Phospholipid phosphatase-related protein type 5 (321 aa).

6 consecutive transmembrane segments (helical) span residues 10–30 (SSMLYFQMVIMAGTVMLAYYF), 62–82 (AVPPVLLYSLAAGVPVLVIIV), 122–142 (FLGIYTFGLFATDIFVNAGQV), 196–213 (AALSVYAAMYLTMYITNT), 225–245 (VLCLGLMCLAFLTGLNRVAEY), and 252–272 (VIAGFLVGISIAVFLVVCVVN).

This sequence belongs to the PA-phosphatase related phosphoesterase family. Isoform 1 is expressed in brain, lung, kidney and colon. Isoform 2 is expressed in placenta, skeletal muscle and kidney.

The protein resides in the cell membrane. Induces filopodia formation and promotes neurite growth in a CDC42-independent manner; impedes neurite growth inhibitory-mediated axonal retraction. The chain is Phospholipid phosphatase-related protein type 5 from Homo sapiens (Human).